We begin with the raw amino-acid sequence, 729 residues long: Neurochondrin (729 aa).

The residue at position 2 (S2) is an N-acetylserine. S2 carries the phosphoserine modification. 2 S-palmitoyl cysteine lipidation sites follow: C3 and C4. An Asymmetric dimethylarginine modification is found at R75. Phosphoserine is present on S448.

It belongs to the neurochondrin family. Interacts with MCHR1. Interacts with SEMA4C. Interacts with DIAPH1 (via FH3 domain). Interacts with GRM5. Post-translationally, palmitoylated. Palmitoylation by ZDHHC1, ZDHHC3 and ZDHHC11 regulates the association of NCDN with endosome membranes. May also be palmitoylated by ZDHHC7. In terms of tissue distribution, expressed in brain and in peripheral nervous system (at protein level). Weakly expressed in neurites.

It localises to the cytoplasm. The protein resides in the cytosol. The protein localises to the endosome membrane. Its subcellular location is the cell projection. It is found in the dendrite. It localises to the postsynapse. Functionally, probably involved in signal transduction, in the nervous system, via increasing cell surface localization of GRM5 and positively regulating its signaling. Required for the spatial learning process. Acts as a negative regulator of Ca(2+)-calmodulin-dependent protein kinase 2 (CaMK2) phosphorylation. May play a role in modulating melanin-concentrating hormone-mediated functions via its interaction with MCHR1 that interferes with G protein-coupled signal transduction. May be involved in bone metabolism. May also be involved in neurite outgrowth. This chain is Neurochondrin (Ncdn), found in Rattus norvegicus (Rat).